The chain runs to 439 residues: O-methyltransferase aurJ (439 aa).

Aspartate 283 lines the S-adenosyl-L-methionine pocket. Histidine 338 serves as the catalytic Proton acceptor.

This sequence belongs to the class I-like SAM-binding methyltransferase superfamily. Cation-independent O-methyltransferase family. COMT subfamily.

It catalyses the reaction norrubrofusarin + S-adenosyl-L-methionine = rubrofusarin + S-adenosyl-L-homocysteine + H(+). It functions in the pathway pigment biosynthesis. Functionally, O-methyltransferase; part of the gene cluster that mediates the biosynthesis of aurofusarin, a red mycelium pigment which is acting as a mycotoxin. The first step is performed by the polyketide synthase which condenses one acetyl-CoA and 6 malonyl-CoA units to form the first intermediate, the cyclic heptaketide and yellow pigment YWA1. The C2 hydroxyl group in the pyrone ring of YWA1 is probably formed during ring closure by an aldol-type cyclization reaction. The dehydratase aurZ then acts as the first tailoring enzyme in the aurofusarin biosynthetic pathway by converting YWA1 to nor-rubrofusarin. Nor-rubrofusarin is then methylated to rubrofusarin by the O-methyltransferase aurJ. Rubrofusarin is then transported across the plasma membrane by the rubrofusarin-specific pump aurT for further enzymatic processing by the extracellular complex composed of GIP1, aurF, aurO and aurS to yield aurofusarin. The sequence is that of O-methyltransferase aurJ from Gibberella zeae (strain ATCC MYA-4620 / CBS 123657 / FGSC 9075 / NRRL 31084 / PH-1) (Wheat head blight fungus).